A 316-amino-acid polypeptide reads, in one-letter code: HPr kinase/phosphorylase (316 aa).

Active-site residues include His-143 and Lys-164. Residue 158 to 165 (GEAGSGKS) participates in ATP binding. Ser-165 is a binding site for Mg(2+). Asp-182 functions as the Proton acceptor; for phosphorylation activity. Proton donor; for dephosphorylation activity in the catalytic mechanism. Residues 206 to 215 (LEVRGLGVLN) are important for the catalytic mechanism of both phosphorylation and dephosphorylation. Glu-207 provides a ligand contact to Mg(2+). The active site involves Arg-251. Positions 272-277 (PVMPGR) are important for the catalytic mechanism of dephosphorylation.

It belongs to the HPrK/P family. In terms of assembly, homohexamer. Mg(2+) serves as cofactor.

It carries out the reaction [HPr protein]-L-serine + ATP = [HPr protein]-O-phospho-L-serine + ADP + H(+). The catalysed reaction is [HPr protein]-O-phospho-L-serine + phosphate + H(+) = [HPr protein]-L-serine + diphosphate. In terms of biological role, catalyzes the ATP- as well as the pyrophosphate-dependent phosphorylation of a specific serine residue in HPr, a phosphocarrier protein of the phosphoenolpyruvate-dependent sugar phosphotransferase system (PTS). HprK/P also catalyzes the pyrophosphate-producing, inorganic phosphate-dependent dephosphorylation (phosphorolysis) of seryl-phosphorylated HPr (P-Ser-HPr). In Xanthomonas campestris pv. campestris (strain 8004), this protein is HPr kinase/phosphorylase.